Here is a 308-residue protein sequence, read N- to C-terminus: UDP-N-acetylenolpyruvoylglucosamine reductase (308 aa).

One can recognise an FAD-binding PCMH-type domain in the interval 30 to 213 (RVGGAAEWFI…KATTQSHLDH (184 aa)). R176 is a catalytic residue. Residue S227 is the Proton donor of the active site. E297 is an active-site residue.

This sequence belongs to the MurB family. It depends on FAD as a cofactor.

It is found in the cytoplasm. It carries out the reaction UDP-N-acetyl-alpha-D-muramate + NADP(+) = UDP-N-acetyl-3-O-(1-carboxyvinyl)-alpha-D-glucosamine + NADPH + H(+). The protein operates within cell wall biogenesis; peptidoglycan biosynthesis. Its function is as follows. Cell wall formation. This is UDP-N-acetylenolpyruvoylglucosamine reductase from Acaryochloris marina (strain MBIC 11017).